The chain runs to 508 residues: MAMRTPEELSNLIKDLIEQYTPEVKMVDFGIVFQVGDGIARIYGLEKAMSGELLEFEDGTLGIALNLEANNVGAVLLGDGLKITEGSRVRCTGKIAEIPVGEAYLGRVVDGLARPVDGKGAVQTKDSRAIESPAPGIVARRSVYEPLATGLVAVDAMIPVGRGQRELIIGDRQTGKTAIAVDTILNQKGKGVICVYVAIGQKASSVAQVLNTLKERGALDYTIIVMANANEPATLQYLAPYTGATLAEYFMYTGRPTLTIYDDLSKQAQAYREMSLLLRRPPGREAYPGDVFYLHSRLLERAAKLNNALGEGSMTALPIVETQEGDVSAYIPTNVISITDGQIFLAAGLFNSGLRPAINVGISVSRVGSAAQPKAMKQVAGKLKLELAQFAELEAFSQFASDLDQATQNQLARGARLREILKQPQSSPLSVEEQVASLYAGTNGYLDKLEVSQVRAYLSGLRSYLANSYPKYGEILRSTLTFTPEAEGLVKQAINEYLEEFKSQAKAA.

Position 170-177 (glycine 170–threonine 177) interacts with ATP.

Belongs to the ATPase alpha/beta chains family. As to quaternary structure, F-type ATPases have 2 components, F(1) - the catalytic core - and F(0) - the membrane proton channel. F(1) has five subunits: alpha(3), beta(3), gamma(1), delta(1), epsilon(1). F(0) has four main subunits: a(1), b(1), b'(1) and c(10-14). The alpha and beta chains form an alternating ring which encloses part of the gamma chain. F(1) is attached to F(0) by a central stalk formed by the gamma and epsilon chains, while a peripheral stalk is formed by the delta, b and b' chains.

It is found in the plastid. The protein localises to the chloroplast thylakoid membrane. The enzyme catalyses ATP + H2O + 4 H(+)(in) = ADP + phosphate + 5 H(+)(out). In terms of biological role, f(1)F(0) ATP synthase produces ATP from ADP in the presence of a proton or sodium gradient. F-type ATPases consist of two structural domains, F(1) containing the extramembraneous catalytic core and F(0) containing the membrane proton channel, linked together by a central stalk and a peripheral stalk. During catalysis, ATP synthesis in the catalytic domain of F(1) is coupled via a rotary mechanism of the central stalk subunits to proton translocation. The alpha chain is a regulatory subunit. This is ATP synthase subunit alpha, chloroplastic from Chlamydomonas reinhardtii (Chlamydomonas smithii).